The chain runs to 323 residues: tRNA U34 carboxymethyltransferase (323 aa).

Residues Lys-91, Trp-105, Lys-110, Gly-130, 152–154 (DPT), 181–182 (IE), Met-196, Tyr-200, and Arg-315 contribute to the carboxy-S-adenosyl-L-methionine site.

It belongs to the class I-like SAM-binding methyltransferase superfamily. CmoB family. Homotetramer.

It carries out the reaction carboxy-S-adenosyl-L-methionine + 5-hydroxyuridine(34) in tRNA = 5-carboxymethoxyuridine(34) in tRNA + S-adenosyl-L-homocysteine + H(+). Functionally, catalyzes carboxymethyl transfer from carboxy-S-adenosyl-L-methionine (Cx-SAM) to 5-hydroxyuridine (ho5U) to form 5-carboxymethoxyuridine (cmo5U) at position 34 in tRNAs. This Salmonella gallinarum (strain 287/91 / NCTC 13346) protein is tRNA U34 carboxymethyltransferase.